A 326-amino-acid chain; its full sequence is Glycerol-3-phosphate dehydrogenase [NAD(P)+] (326 aa).

NADPH contacts are provided by Trp-13, Arg-33, and Lys-107. 3 residues coordinate sn-glycerol 3-phosphate: Lys-107, Gly-135, and Ser-137. NADPH is bound at residue Ala-139. Positions 190, 243, 253, 254, and 255 each coordinate sn-glycerol 3-phosphate. The active-site Proton acceptor is the Lys-190. Arg-254 is an NADPH binding site. NADPH-binding residues include Leu-273 and Glu-275.

The protein belongs to the NAD-dependent glycerol-3-phosphate dehydrogenase family.

The protein resides in the cytoplasm. It carries out the reaction sn-glycerol 3-phosphate + NAD(+) = dihydroxyacetone phosphate + NADH + H(+). It catalyses the reaction sn-glycerol 3-phosphate + NADP(+) = dihydroxyacetone phosphate + NADPH + H(+). It functions in the pathway membrane lipid metabolism; glycerophospholipid metabolism. In terms of biological role, catalyzes the reduction of the glycolytic intermediate dihydroxyacetone phosphate (DHAP) to sn-glycerol 3-phosphate (G3P), the key precursor for phospholipid synthesis. The polypeptide is Glycerol-3-phosphate dehydrogenase [NAD(P)+] (Brucella ovis (strain ATCC 25840 / 63/290 / NCTC 10512)).